A 600-amino-acid chain; its full sequence is MASTFTATSSIGSMVAPNGHKSDKKLISKLSSSSFGRRQSVCPRPRRSSSAIVCAAKELHFNKDGTTIRRLQAGVNKLADLVGVTLGPKGRNVVLESKYGSPRIVNDGVTVAREVELEDPVENIGAKLVRQAAAKTNDLAGDGTTTSVVLAQGFIAEGVKVVAAGANPVLITRGIEKTAKALVTELKKMSKEVEDSELADVAAVSAGNNDEIGNMIAEAMSKVGRKGVVTLEEGKSAENNLYVVEGMQFDRGYISPYFVTDSEKMSVEFDNCKLLLVDKKITNARDLVGVLEDAIRGGYPILIIAEDIEQEALATLVVNKLRGTLKIAALRAPGFGERKSQYLDDIAILTGATVIREEVGLSLDKAGKEVLGNASKVVLTKETSTIVGDGSTQDAVKKRVTQIKNLIEQAEQDYEKEKLNERIAKLSGGVAVIQVGAQTETELKEKKLRVEDALNATKAAVEEGIVVGGGCTLLRLASKVDAIKATLDNDEEKVGADIVKRALSYPLKLIAKNAGVNGSVVSEKVLSNDNVKFGYNAATGKYEDLMAAGIIDPTKVVRCCLEHAASVAKTFLMSDCVVVEIKEPEPVPVGNPMDNSGYGY.

Residues 1 to 12 (MASTFTATSSIG) show a composition bias toward polar residues. A disordered region spans residues 1-23 (MASTFTATSSIGSMVAPNGHKSD). The N-terminal 54 residues, 1–54 (MASTFTATSSIGSMVAPNGHKSDKKLISKLSSSSFGRRQSVCPRPRRSSSAIVC), are a transit peptide targeting the chloroplast. 2 positions are modified to phosphoserine: Ser101 and Ser478.

The protein belongs to the chaperonin (HSP60) family. Part of the Cpn60 complex composed of 7 alpha and 7 beta subunits. Can also form a complex composed of 14 beta subunits only. Both complexes show ATPase activity. The Cpn60 complex interacts with the Cpn10 complex. Interacts with RAB during heat stress. As to expression, expressed in leaves, stems, petioles and flowers.

It is found in the plastid. Its subcellular location is the chloroplast stroma. In terms of biological role, binds RuBisCO small and large subunits and is implicated in the assembly of the enzyme oligomer. Involved in protein assisted folding. Required for proper plastid division. In Arabidopsis thaliana (Mouse-ear cress), this protein is Chaperonin 60 subunit beta 1, chloroplastic (CPN60B1).